A 101-amino-acid chain; its full sequence is DNA-binding protein Fis (101 aa).

The segment at residues glutamine 77–lysine 96 is a DNA-binding region (H-T-H motif).

It belongs to the transcriptional regulatory Fis family. Homodimer.

Activates ribosomal RNA transcription. Plays a direct role in upstream activation of rRNA promoters. The sequence is that of DNA-binding protein Fis from Shewanella baltica (strain OS223).